We begin with the raw amino-acid sequence, 118 residues long: Small ribosomal subunit protein mS37 (118 aa).

One can recognise a CHCH domain in the interval 42–84 (EATCITEMSMMMACWKQNEFRDEACRKEIQDFFDCSSRAQEAR). Short sequence motifs (cx9C motif) lie at residues 45–55 (CITEMSMMMAC) and 66–76 (CRKEIQDFFDC). 2 disulfide bridges follow: cysteine 45–cysteine 76 and cysteine 55–cysteine 66. Residues 86–105 (MRSIQESLGQSESLSPHKMT) are disordered. A compositionally biased stretch (polar residues) spans 89-99 (IQESLGQSESL).

This sequence belongs to the mitochondrion-specific ribosomal protein mS37 family. As to quaternary structure, component of the mitochondrial ribosome small subunit (28S) which comprises a 12S rRNA and about 30 distinct proteins.

It is found in the mitochondrion. It localises to the nucleus. The protein is Small ribosomal subunit protein mS37 (Chchd1) of Mus musculus (Mouse).